A 385-amino-acid polypeptide reads, in one-letter code: uncharacterized protein (385 aa).

It belongs to the phage portal family. HK97 subfamily.

This is an uncharacterized protein from Rickettsia felis (strain ATCC VR-1525 / URRWXCal2) (Rickettsia azadi).